A 430-amino-acid polypeptide reads, in one-letter code: MDAQAAARLGDEIAHGFGVAAMVAGAVAGALIGAAVVAATAATGGLAAVILAGSIAAGGLSMFQIVKGLTTIFELPEPTTGVLIRGSFNVYVNSRNAMRAGDDVSATCSGLPLNHPLWPFPVLIAEGSATVYINGKPAARLQSKMVCGAHIKTGSQNTFIGGPTERVAFVLDLEEWLHTGLEALGLAALAGGLLLAAMAGVAALVGVVAIGGLMMGGMALLGDLGDRLGPGYRDLFQGVAGMALLGFGPKLAGRRPAAVTSETAQRRAYLNNKFGRSGNLDHDINYRGNRETAAKFFKSKDIDPADAESYMNGLDFNHPVRVETLAPGKNLWQYQSPGAPQGNWYTLSPRVQPTELGINPMGTNRAANTIEPKVLNSYRTTQKVEVLRSTAAPTDDFWSVKGQSYPAKGGAQQLFSNEKGSFGLLPREGS.

3 consecutive transmembrane segments (helical) span residues 17 to 37 (FGVA…AAVV), 46 to 66 (LAAV…FQIV), and 193 to 213 (LLLA…IGGL).

As to quaternary structure, interacts with Tsi6, VgrG1a, EagT6 and EF-Tu.

It localises to the membrane. It carries out the reaction NAD(+) + H2O = ADP-D-ribose + nicotinamide + H(+). In terms of biological role, type VI secretion exported toxin that acts as a glycohydrolase on bacterial target cells and degrades the essential dinucleotides NAD(+) and NADP(+), thereby inducing bacteriostasis. The activity resides in the C-terminal region that is initially neutralized by the cognate immunity protein Tsi6. This chain is NAD(P)(+) glycohydrolase toxin Tse6, found in Pseudomonas aeruginosa (strain ATCC 15692 / DSM 22644 / CIP 104116 / JCM 14847 / LMG 12228 / 1C / PRS 101 / PAO1).